Consider the following 187-residue polypeptide: Large ribosomal subunit protein uL18 (187 aa).

Belongs to the universal ribosomal protein uL18 family. Part of the 50S ribosomal subunit. Interacts with proteins L5 and L21e, and attaches the 5S rRNA to the 23S rRNA. Has been cross-linked to L21e.

This is one of 5 proteins that mediate the attachment of the 5S rRNA onto the large ribosomal subunit, where it forms part of the central protuberance and stabilizes the orientation of adjacent RNA domains. In Haloarcula marismortui (strain ATCC 43049 / DSM 3752 / JCM 8966 / VKM B-1809) (Halobacterium marismortui), this protein is Large ribosomal subunit protein uL18 (rpl18).